Here is a 322-residue protein sequence, read N- to C-terminus: Cyclin mcs2 (322 aa).

The residue at position 310 (S310) is a Phosphoserine.

The protein belongs to the cyclin family. Cyclin C subfamily. One of the nine subunits forming the core-TFIIH basal transcription factor. Interacts with crk1 and skp1.

It is found in the nucleus. Functionally, essential for progression through the cell cycle. Possesses kinase activity that can be detected when myelin basic protein (MBP) is provided as an exogenous substrate. The chain is Cyclin mcs2 (mcs2) from Schizosaccharomyces pombe (strain 972 / ATCC 24843) (Fission yeast).